Consider the following 228-residue polypeptide: Uracil-DNA glycosylase (228 aa).

The Proton acceptor role is filled by Asp-64.

The protein belongs to the uracil-DNA glycosylase (UDG) superfamily. UNG family.

Its subcellular location is the cytoplasm. It catalyses the reaction Hydrolyzes single-stranded DNA or mismatched double-stranded DNA and polynucleotides, releasing free uracil.. Excises uracil residues from the DNA which can arise as a result of misincorporation of dUMP residues by DNA polymerase or due to deamination of cytosine. In Yersinia pseudotuberculosis serotype IB (strain PB1/+), this protein is Uracil-DNA glycosylase.